Reading from the N-terminus, the 381-residue chain is Succinyl-diaminopimelate desuccinylase (381 aa).

Residue His-69 participates in Zn(2+) binding. The active site involves Asp-71. Asp-103 is a binding site for Zn(2+). Glu-137 serves as the catalytic Proton acceptor. The Zn(2+) site is built by Glu-138, Glu-166, and His-355.

This sequence belongs to the peptidase M20A family. DapE subfamily. As to quaternary structure, homodimer. The cofactor is Zn(2+). Co(2+) serves as cofactor.

It catalyses the reaction N-succinyl-(2S,6S)-2,6-diaminopimelate + H2O = (2S,6S)-2,6-diaminopimelate + succinate. It functions in the pathway amino-acid biosynthesis; L-lysine biosynthesis via DAP pathway; LL-2,6-diaminopimelate from (S)-tetrahydrodipicolinate (succinylase route): step 3/3. Its function is as follows. Catalyzes the hydrolysis of N-succinyl-L,L-diaminopimelic acid (SDAP), forming succinate and LL-2,6-diaminopimelate (DAP), an intermediate involved in the bacterial biosynthesis of lysine and meso-diaminopimelic acid, an essential component of bacterial cell walls. In Rickettsia massiliae (strain Mtu5), this protein is Succinyl-diaminopimelate desuccinylase.